We begin with the raw amino-acid sequence, 190 residues long: Segregation and condensation protein B (190 aa).

The protein belongs to the ScpB family. Homodimer. Homodimerization may be required to stabilize the binding of ScpA to the Smc head domains. Component of a cohesin-like complex composed of ScpA, ScpB and the Smc homodimer, in which ScpA and ScpB bind to the head domain of Smc. The presence of the three proteins is required for the association of the complex with DNA.

It localises to the cytoplasm. Participates in chromosomal partition during cell division. May act via the formation of a condensin-like complex containing Smc and ScpA that pull DNA away from mid-cell into both cell halves. The protein is Segregation and condensation protein B of Bacillus cereus (strain ATCC 10987 / NRS 248).